Here is a 108-residue protein sequence, read N- to C-terminus: Curli assembly protein CsgC (108 aa).

Positions M1–A8 are cleaved as a signal peptide.

It belongs to the CsgC/AgfC family.

It localises to the periplasm. Functionally, plays a role in the extracellular assembly of CsgA into thin aggregative fimbriae (Tafi) fibers. Assembly may also require CsgE. Tafi are thought to be assembled via an extracellular nucleation-precipitation (ENP) pathway, and possibly also via an intracellular non-CsgC-dependent pathway. In Salmonella arizonae (strain ATCC BAA-731 / CDC346-86 / RSK2980), this protein is Curli assembly protein CsgC.